Reading from the N-terminus, the 235-residue chain is Probable membrane-associated kinase regulator 6 (235 aa).

Residues 108–140 form a disordered region; the sequence is SAATEEESEPLDTTTSEKIDTRGLNSKPSPTSS. Over residues 130-140 the composition is skewed to polar residues; it reads GLNSKPSPTSS.

It localises to the cell membrane. May be involved in abscisic acid signaling by acting as a kinase regulator. This Arabidopsis thaliana (Mouse-ear cress) protein is Probable membrane-associated kinase regulator 6 (MAKR6).